The sequence spans 206 residues: Small ribosomal subunit protein uS4 (206 aa).

The disordered stretch occupies residues 28 to 52 (YLDRRPYAPGQHGQRRGRGRPSDYS). One can recognise an S4 RNA-binding domain in the interval 96-171 (RRLDNVVFRM…QKRRRVSPWI (76 aa)).

Belongs to the universal ribosomal protein uS4 family. As to quaternary structure, part of the 30S ribosomal subunit. Contacts protein S5. The interaction surface between S4 and S5 is involved in control of translational fidelity.

One of the primary rRNA binding proteins, it binds directly to 16S rRNA where it nucleates assembly of the body of the 30S subunit. Functionally, with S5 and S12 plays an important role in translational accuracy. The sequence is that of Small ribosomal subunit protein uS4 from Deinococcus geothermalis (strain DSM 11300 / CIP 105573 / AG-3a).